The chain runs to 716 residues: Fatty acid oxidation complex subunit alpha (716 aa).

Residues Met1–Ala189 form an enoyl-CoA hydratase/isomerase region. Substrate is bound at residue Asp296. The 3-hydroxyacyl-CoA dehydrogenase stretch occupies residues Lys311 to Ala716. Residues Met324, Asp343, Val400–Glu402, Lys407, and Ser429 each bind NAD(+). His450 (for 3-hydroxyacyl-CoA dehydrogenase activity) is an active-site residue. Residue Asn453 participates in NAD(+) binding. Residues Asn500 and Tyr660 each contribute to the substrate site.

This sequence in the N-terminal section; belongs to the enoyl-CoA hydratase/isomerase family. In the C-terminal section; belongs to the 3-hydroxyacyl-CoA dehydrogenase family. Heterotetramer of two alpha chains (FadB) and two beta chains (FadA).

It catalyses the reaction a (3S)-3-hydroxyacyl-CoA + NAD(+) = a 3-oxoacyl-CoA + NADH + H(+). The catalysed reaction is a (3S)-3-hydroxyacyl-CoA = a (2E)-enoyl-CoA + H2O. It carries out the reaction a 4-saturated-(3S)-3-hydroxyacyl-CoA = a (3E)-enoyl-CoA + H2O. The enzyme catalyses (3S)-3-hydroxybutanoyl-CoA = (3R)-3-hydroxybutanoyl-CoA. It catalyses the reaction a (3Z)-enoyl-CoA = a 4-saturated (2E)-enoyl-CoA. The catalysed reaction is a (3E)-enoyl-CoA = a 4-saturated (2E)-enoyl-CoA. It participates in lipid metabolism; fatty acid beta-oxidation. In terms of biological role, involved in the aerobic and anaerobic degradation of long-chain fatty acids via beta-oxidation cycle. Catalyzes the formation of 3-oxoacyl-CoA from enoyl-CoA via L-3-hydroxyacyl-CoA. It can also use D-3-hydroxyacyl-CoA and cis-3-enoyl-CoA as substrate. This Shewanella baltica (strain OS195) protein is Fatty acid oxidation complex subunit alpha.